Consider the following 176-residue polypeptide: Inorganic pyrophosphatase (176 aa).

Residues Lys-30, Arg-44, and Tyr-56 each contribute to the substrate site. Residues Asp-66, Asp-71, and Asp-103 each contribute to the Mg(2+) site. Tyr-142 lines the substrate pocket.

Belongs to the PPase family. As to quaternary structure, homohexamer. Requires Mg(2+) as cofactor.

Its subcellular location is the cytoplasm. The catalysed reaction is diphosphate + H2O = 2 phosphate + H(+). Catalyzes the hydrolysis of inorganic pyrophosphate (PPi) forming two phosphate ions. This is Inorganic pyrophosphatase from Escherichia coli O6:H1 (strain CFT073 / ATCC 700928 / UPEC).